The primary structure comprises 64 residues: Conotoxin mr5.3 (64 aa).

An N-terminal signal peptide occupies residues 1 to 19 (MRCVPVFVILLLLIASVPS). Positions 20–48 (VDAQLKTKDDMPLASSHANVKRTLQILRN) are excised as a propeptide. 2 positions are modified to 4-carboxyglutamate: glutamate 56 and glutamate 60.

Post-translationally, contains 2 disulfide bonds that can be either 'C1-C3, C2-C4' or 'C1-C4, C2-C3', since these disulfide connectivities have been observed for conotoxins with cysteine framework V (for examples, see AC P0DQQ7 and AC P81755). Expressed by the venom duct.

It localises to the secreted. The chain is Conotoxin mr5.3 from Conus marmoreus (Marble cone).